Reading from the N-terminus, the 275-residue chain is Ribosomal RNA small subunit methyltransferase A (275 aa).

S-adenosyl-L-methionine-binding residues include Asn-21, Leu-23, Gly-48, Glu-69, Asp-94, and Asn-115.

This sequence belongs to the class I-like SAM-binding methyltransferase superfamily. rRNA adenine N(6)-methyltransferase family. RsmA subfamily.

The protein resides in the cytoplasm. It carries out the reaction adenosine(1518)/adenosine(1519) in 16S rRNA + 4 S-adenosyl-L-methionine = N(6)-dimethyladenosine(1518)/N(6)-dimethyladenosine(1519) in 16S rRNA + 4 S-adenosyl-L-homocysteine + 4 H(+). In terms of biological role, specifically dimethylates two adjacent adenosines (A1518 and A1519) in the loop of a conserved hairpin near the 3'-end of 16S rRNA in the 30S particle. May play a critical role in biogenesis of 30S subunits. In Clostridium botulinum (strain Langeland / NCTC 10281 / Type F), this protein is Ribosomal RNA small subunit methyltransferase A.